The chain runs to 329 residues: Ankyrin repeat and SOCS box protein 5 (329 aa).

ANK repeat units lie at residues 69–98 (ADRSPLHEAASQGRLLALRTLLSQGYNVNA), 102–131 (DHITPLHEACLGDHVACARTLLEAGANVNA), 135–164 (DGVTPLFNACSQGSTSCTELLLEYGAKAQL), 167–196 (CLPSPTHEAASKGHHEFLDLLISWGIDVDQ), 200–229 (HLGTPLYVACMSQQFHCIWKLLYAGADVQK), and 232–261 (YWDTPLHAAAQQSSTEIVNLLIEFGADINA). The SOCS box domain occupies 278 to 329 (MVERILLQHEATPSSLCQLCRLCIRNYIGRPRLHLIPQLQLPTLLQNFLQYR).

It belongs to the ankyrin SOCS box (ASB) family. Expressed in endothelial and smooth muscle cells of collateral arteries as well as in satellite cells.

It participates in protein modification; protein ubiquitination. Its function is as follows. May be a substrate-recognition component of a SCF-like ECS (Elongin-Cullin-SOCS-box protein) E3 ubiquitin-protein ligase complex which mediates the ubiquitination and subsequent proteasomal degradation of target proteins. May play a role in the initiation of arteriogenesis. This Oryctolagus cuniculus (Rabbit) protein is Ankyrin repeat and SOCS box protein 5 (ASB5).